A 234-amino-acid chain; its full sequence is Probable plastid-lipid-associated protein 5, chloroplastic (234 aa).

The N-terminal 45 residues, Met-1–Arg-45, are a transit peptide targeting the chloroplast.

This sequence belongs to the PAP/fibrillin family.

It is found in the plastid. The protein resides in the chloroplast thylakoid. The polypeptide is Probable plastid-lipid-associated protein 5, chloroplastic (PAP5) (Arabidopsis thaliana (Mouse-ear cress)).